A 363-amino-acid polypeptide reads, in one-letter code: Fructose-bisphosphate aldolase C (363 aa).

Phosphotyrosine is present on Tyr-5. 3 positions are modified to phosphoserine: Ser-36, Ser-39, and Ser-45. A substrate-binding site is contributed by Arg-56. Position 111 is an N6-acetyllysine (Lys-111). Lys-147 lines the substrate pocket. Catalysis depends on Glu-188, which acts as the Proton acceptor. Lys-230 (schiff-base intermediate with dihydroxyacetone-P) is an active-site residue.

This sequence belongs to the class I fructose-bisphosphate aldolase family. In terms of assembly, homotetramer. Interacts with ATP6V1E1. In terms of tissue distribution, high expression in the adult brain.

The enzyme catalyses beta-D-fructose 1,6-bisphosphate = D-glyceraldehyde 3-phosphate + dihydroxyacetone phosphate. It functions in the pathway carbohydrate degradation; glycolysis; D-glyceraldehyde 3-phosphate and glycerone phosphate from D-glucose: step 4/4. The protein is Fructose-bisphosphate aldolase C (Aldoc) of Rattus norvegicus (Rat).